Consider the following 143-residue polypeptide: Anti-sigma F factor (143 aa).

The protein belongs to the anti-sigma-factor family.

It catalyses the reaction L-seryl-[protein] + ATP = O-phospho-L-seryl-[protein] + ADP + H(+). The catalysed reaction is L-threonyl-[protein] + ATP = O-phospho-L-threonyl-[protein] + ADP + H(+). Functionally, binds to sigma F and blocks its ability to form an RNA polymerase holoenzyme (E-sigma F). Phosphorylates SpoIIAA on a serine residue. This phosphorylation may enable SpoIIAA to act as an anti-anti-sigma factor that counteracts SpoIIAB and thus releases sigma F from inhibition. The chain is Anti-sigma F factor from Clostridium botulinum (strain Eklund 17B / Type B).